Reading from the N-terminus, the 381-residue chain is Queuine tRNA-ribosyltransferase (381 aa).

Catalysis depends on Asp89, which acts as the Proton acceptor. Substrate is bound by residues 89–93 (DSGGF), Asp143, Gln187, and Gly214. Positions 245–251 (GVGKPED) are RNA binding. Asp264 functions as the Nucleophile in the catalytic mechanism. The RNA binding; important for wobble base 34 recognition stretch occupies residues 269–273 (TRNAR). Residues Cys302, Cys304, Cys307, and His333 each contribute to the Zn(2+) site.

The protein belongs to the queuine tRNA-ribosyltransferase family. As to quaternary structure, homodimer. Within each dimer, one monomer is responsible for RNA recognition and catalysis, while the other monomer binds to the replacement base PreQ1. It depends on Zn(2+) as a cofactor.

The enzyme catalyses 7-aminomethyl-7-carbaguanine + guanosine(34) in tRNA = 7-aminomethyl-7-carbaguanosine(34) in tRNA + guanine. It participates in tRNA modification; tRNA-queuosine biosynthesis. Its function is as follows. Catalyzes the base-exchange of a guanine (G) residue with the queuine precursor 7-aminomethyl-7-deazaguanine (PreQ1) at position 34 (anticodon wobble position) in tRNAs with GU(N) anticodons (tRNA-Asp, -Asn, -His and -Tyr). Catalysis occurs through a double-displacement mechanism. The nucleophile active site attacks the C1' of nucleotide 34 to detach the guanine base from the RNA, forming a covalent enzyme-RNA intermediate. The proton acceptor active site deprotonates the incoming PreQ1, allowing a nucleophilic attack on the C1' of the ribose to form the product. After dissociation, two additional enzymatic reactions on the tRNA convert PreQ1 to queuine (Q), resulting in the hypermodified nucleoside queuosine (7-(((4,5-cis-dihydroxy-2-cyclopenten-1-yl)amino)methyl)-7-deazaguanosine). This chain is Queuine tRNA-ribosyltransferase, found in Pectobacterium atrosepticum (strain SCRI 1043 / ATCC BAA-672) (Erwinia carotovora subsp. atroseptica).